The chain runs to 465 residues: Methionine aminopeptidase 2-2 (465 aa).

Residues 1–11 (MGSKTPHNHRR) are compositionally biased toward basic residues. Residues 1-89 (MGSKTPHNHR…KKKKNTKELE (89 aa)) are disordered. Positions 43 to 54 (GESEGGEDEDDD) are enriched in acidic residues. The span at 73–84 (RNKRKKKKKKKN) shows a compositional bias: basic residues. His-217 is a substrate binding site. Residues Asp-238, Asp-249, and His-318 each coordinate a divalent metal cation. Residue His-326 participates in substrate binding. A divalent metal cation-binding residues include Glu-351 and Glu-446.

Belongs to the peptidase M24A family. Methionine aminopeptidase eukaryotic type 2 subfamily. Requires Co(2+) as cofactor. Zn(2+) is required as a cofactor. Mn(2+) serves as cofactor. The cofactor is Fe(2+).

It localises to the cytoplasm. It catalyses the reaction Release of N-terminal amino acids, preferentially methionine, from peptides and arylamides.. Functionally, cotranslationally removes the N-terminal methionine from nascent proteins. The N-terminal methionine is often cleaved when the second residue in the primary sequence is small and uncharged (Met-Ala-, Cys, Gly, Pro, Ser, Thr, or Val). This Ajellomyces capsulatus (strain G186AR / H82 / ATCC MYA-2454 / RMSCC 2432) (Darling's disease fungus) protein is Methionine aminopeptidase 2-2.